The sequence spans 288 residues: Tryptophan 2,3-dioxygenase (288 aa).

Substrate-binding positions include 57-61 (FIIQH), Y119, and R123. H246 contributes to the heme binding site. Residue T260 participates in substrate binding.

Belongs to the tryptophan 2,3-dioxygenase family. As to quaternary structure, homotetramer. Heme is required as a cofactor.

It carries out the reaction L-tryptophan + O2 = N-formyl-L-kynurenine. The protein operates within amino-acid degradation; L-tryptophan degradation via kynurenine pathway; L-kynurenine from L-tryptophan: step 1/2. Heme-dependent dioxygenase that catalyzes the oxidative cleavage of the L-tryptophan (L-Trp) pyrrole ring and converts L-tryptophan to N-formyl-L-kynurenine. Catalyzes the oxidative cleavage of the indole moiety. This chain is Tryptophan 2,3-dioxygenase, found in Pseudomonas aeruginosa (strain ATCC 15692 / DSM 22644 / CIP 104116 / JCM 14847 / LMG 12228 / 1C / PRS 101 / PAO1).